We begin with the raw amino-acid sequence, 73 residues long: Large ribosomal subunit protein bL31 (73 aa).

This sequence belongs to the bacterial ribosomal protein bL31 family. Type A subfamily. As to quaternary structure, part of the 50S ribosomal subunit. Contacts protein L9.

Its function is as follows. Binds the 23S rRNA and interacts with the tRNA in the E site. The protein is Large ribosomal subunit protein bL31 (rpmE) of Deinococcus radiodurans (strain ATCC 13939 / DSM 20539 / JCM 16871 / CCUG 27074 / LMG 4051 / NBRC 15346 / NCIMB 9279 / VKM B-1422 / R1).